Reading from the N-terminus, the 715-residue chain is Scinderin (715 aa).

The actin-severing stretch occupies residues M1–E363. Residues L27–T76 form a Gelsolin-like 1 repeat. Y102 is subject to Phosphotyrosine. A 1,2-diacyl-sn-glycero-3-phospho-(1D-myo-inositol-4,5-bisphosphate) contacts are provided by residues K112–A119 and R138–R146. Gelsolin-like repeat units follow at residues V148–L188, V265–K307, V398–T451, and T523–K564. Residues K364–W715 are ca(2+)-dependent actin binding. The Ca(2+) site is built by N538, D539, and E562. The residue at position 599 (Y599) is a Phosphotyrosine. Residues F626 to K668 form a Gelsolin-like 6 repeat. The Ca(2+) site is built by D643, D644, and E666.

It belongs to the villin/gelsolin family. Expressed in megakaryocytes.

Its subcellular location is the cytoplasm. It is found in the cytoskeleton. It localises to the cell projection. The protein resides in the podosome. Functionally, ca(2+)-dependent actin filament-severing protein that has a regulatory function in exocytosis by affecting the organization of the microfilament network underneath the plasma membrane. Severing activity is inhibited by phosphatidylinositol 4,5-bis-phosphate (PIP2). In vitro, also has barbed end capping and nucleating activities in the presence of Ca(2+). Required for megakaryocyte differentiation, maturation, polyploidization and apoptosis with the release of platelet-like particles. Plays a role in osteoclastogenesis (OCG) and actin cytoskeletal organization in osteoclasts. Regulates chondrocyte proliferation and differentiation. Inhibits cell proliferation and tumorigenesis. Signaling is mediated by MAPK, p38 and JNK pathways. The polypeptide is Scinderin (Homo sapiens (Human)).